A 211-amino-acid polypeptide reads, in one-letter code: PITH domain-containing protein CG6153 (211 aa).

The region spanning 20-192 is the PITH domain; that stretch reads DHALEMGIEY…GVTICNYESR (173 aa).

It belongs to the PITHD1 family.

This is PITH domain-containing protein CG6153 from Drosophila melanogaster (Fruit fly).